A 59-amino-acid polypeptide reads, in one-letter code: KappaPI-actitoxin-Avd3d (59 aa).

The 51-residue stretch at 5–55 (CELPKVVGRCRARFPRYYYNLSSRRCEKFIYGGCGGNANNFHTLEECEKVC) folds into the BPTI/Kunitz inhibitor domain. 3 disulfides stabilise this stretch: cysteine 5–cysteine 55, cysteine 14–cysteine 38, and cysteine 30–cysteine 51.

The protein belongs to the venom Kunitz-type family. Sea anemone type 2 potassium channel toxin subfamily.

It is found in the secreted. Its subcellular location is the nematocyst. Its function is as follows. Dual-function toxin that inhibits both the serine protease trypsin (Kd&lt;30 nM) and voltage-gated potassium channels Kv1.2/KCNA2 (IC(50)=1300 nM). The polypeptide is KappaPI-actitoxin-Avd3d (Anemonia sulcata (Mediterranean snakelocks sea anemone)).